The chain runs to 160 residues: Non-secretory ribonuclease (160 aa).

An N-terminal signal peptide occupies residues 1–27 (MVPKLFTSQICLLLLLGLMGVEGSLHA). C-linked (Man) tryptophan glycosylation is present at W34. Residue H42 is the Proton acceptor of the active site. N44 carries N-linked (GlcNAc...) asparagine glycosylation. 4 disulfides stabilise this stretch: C50–C110, C64–C122, C82–C137, and C89–C98. Y60 carries the post-translational modification 3'-nitrotyrosine. 65 to 69 (KNQNT) lines the substrate pocket. Residues N92, N111, and N138 are each glycosylated (N-linked (GlcNAc...) asparagine). The active-site Proton donor is the H155.

Belongs to the pancreatic ribonuclease family. As to quaternary structure, interacts with and forms a tight 1:1 complex with RNH1. Dimerization of two such complexes may occur.

Its subcellular location is the lysosome. It is found in the cytoplasmic granule. It catalyses the reaction an [RNA] containing cytidine + H2O = an [RNA]-3'-cytidine-3'-phosphate + a 5'-hydroxy-ribonucleotide-3'-[RNA].. It carries out the reaction an [RNA] containing uridine + H2O = an [RNA]-3'-uridine-3'-phosphate + a 5'-hydroxy-ribonucleotide-3'-[RNA].. In terms of biological role, this is a non-secretory ribonuclease. It is a pyrimidine specific nuclease with a slight preference for U. Cytotoxin and helminthotoxin. Possesses a wide variety of biological activities. The chain is Non-secretory ribonuclease (RNASE2) from Macaca fascicularis (Crab-eating macaque).